A 103-amino-acid chain; its full sequence is Large ribosomal subunit protein bL21 (103 aa).

The protein belongs to the bacterial ribosomal protein bL21 family. Part of the 50S ribosomal subunit. Contacts protein L20.

This protein binds to 23S rRNA in the presence of protein L20. The protein is Large ribosomal subunit protein bL21 of Mycolicibacterium paratuberculosis (strain ATCC BAA-968 / K-10) (Mycobacterium paratuberculosis).